We begin with the raw amino-acid sequence, 117 residues long: Toxin CSTX-8 (117 aa).

The N-terminal stretch at 1–20 is a signal peptide; sequence MKVLVICAVLFLAIFSNSSA. The propeptide occupies 21–47; the sequence is ETEDDFLEDESFQADDVIPFLASEQVR. Disulfide bonds link cysteine 50–cysteine 65, cysteine 57–cysteine 74, cysteine 64–cysteine 95, and cysteine 76–cysteine 93. Positions 82–87 are excised as a propeptide; that stretch reads RSETDR. The residue at position 116 (threonine 116) is a Threonine amide.

The protein belongs to the neurotoxin 19 (CSTX) family. 12 subfamily. As to quaternary structure, heterodimer of A and B chains; disulfide-linked. Interacts with CSTX-1 (AC P81694), and with CSTX-9 (AC P58604). In terms of tissue distribution, expressed by the venom gland.

The protein resides in the secreted. It is found in the target cell membrane. Its function is as follows. Synergistic toxin that induces or increases a cytolytic effect when combined with CSTX-1 (AC P81694) or CSTX-9 (AC P58604). When alone, has a weak insecticidal activity, with an unknown molecular target. The sequence is that of Toxin CSTX-8 from Cupiennius salei (American wandering spider).